We begin with the raw amino-acid sequence, 462 residues long: Probable peptidoglycan glycosyltransferase FtsW (462 aa).

Residues 1 to 28 (MREPRHVPQLRASGRRFPQRGRRHRFGK) form a disordered region. Over 1–92 (MREPRHVPQL…RSRMLDFDYS (92 aa)) the chain is Cytoplasmic. The segment covering 13-27 (SGRRFPQRGRRHRFG) has biased composition (basic residues). The chain crosses the membrane as a helical span at residues 93-113 (LLWVSIALLGLGVVMVYSASI). Residues 114-127 (AMPDSPKYASYHDY) lie on the Periplasmic side of the membrane. The chain crosses the membrane as a helical span at residues 128-148 (AFLLRHCVSLVVAFVAAVIAF). Over 149–158 (RVPVSTWDKY) the chain is Cytoplasmic. A helical membrane pass occupies residues 159–179 (APHLFLIALVGLVIVLIPHIG). At 180–192 (KGVNGARRWIPLG) the chain is on the periplasmic side. Residues 193-215 (ITNMQPSEIMKLAVTIYAANYTV) traverse the membrane as a helical segment. At 216–223 (RKQEYMQS) the chain is on the cytoplasmic side. Residues 224–244 (FAKGFLPMAFAVGLVGALLLL) form a helical membrane-spanning segment. Residues 245 to 247 (EPD) are Periplasmic-facing. A helical membrane pass occupies residues 248–268 (MGAFMVVAAIAMGVLFLGGVN). Residues 269–270 (GK) lie on the Cytoplasmic side of the membrane. The helical transmembrane segment at 271–291 (LFGGLVATAVGTFTMLVWLSP) threads the bilayer. Residues 292–349 (WRRERIFAYLDPWDERYAQGKAYQLTHSLIAFGRGEWFGVGLGGSVEKLNYLPEAHTD) lie on the Periplasmic side of the membrane. Residues 350 to 370 (FILAVIGEELGFVGVLVVILL) traverse the membrane as a helical segment. Residues 371 to 398 (FYWIVRRSFEIGRQALALDRTFAGLMAK) are Cytoplasmic-facing. Residues 399-419 (GVGIWFGAQAFINMGVNLGLL) traverse the membrane as a helical segment. Over 420–425 (PTKGLT) the chain is Periplasmic. A helical membrane pass occupies residues 426 to 446 (LPLVSYGGSGILLNCISLAVL). The Cytoplasmic segment spans residues 447–462 (LRVDYENRVLMRGGKV).

This sequence belongs to the SEDS family. FtsW subfamily.

The protein localises to the cell inner membrane. The enzyme catalyses [GlcNAc-(1-&gt;4)-Mur2Ac(oyl-L-Ala-gamma-D-Glu-L-Lys-D-Ala-D-Ala)](n)-di-trans,octa-cis-undecaprenyl diphosphate + beta-D-GlcNAc-(1-&gt;4)-Mur2Ac(oyl-L-Ala-gamma-D-Glu-L-Lys-D-Ala-D-Ala)-di-trans,octa-cis-undecaprenyl diphosphate = [GlcNAc-(1-&gt;4)-Mur2Ac(oyl-L-Ala-gamma-D-Glu-L-Lys-D-Ala-D-Ala)](n+1)-di-trans,octa-cis-undecaprenyl diphosphate + di-trans,octa-cis-undecaprenyl diphosphate + H(+). Its pathway is cell wall biogenesis; peptidoglycan biosynthesis. Functionally, peptidoglycan polymerase that is essential for cell division. This is Probable peptidoglycan glycosyltransferase FtsW from Burkholderia thailandensis (strain ATCC 700388 / DSM 13276 / CCUG 48851 / CIP 106301 / E264).